The following is a 399-amino-acid chain: Argininosuccinate synthase (399 aa).

8-16 (AYSGGLDTS) is a binding site for ATP. Tyr87 contributes to the L-citrulline binding site. Gly117 serves as a coordination point for ATP. Residues Thr119, Asn123, and Asp124 each coordinate L-aspartate. Asn123 provides a ligand contact to L-citrulline. The L-citrulline site is built by Arg127, Ser175, Glu259, and Tyr271.

This sequence belongs to the argininosuccinate synthase family. Type 1 subfamily. Homotetramer.

It is found in the cytoplasm. The catalysed reaction is L-citrulline + L-aspartate + ATP = 2-(N(omega)-L-arginino)succinate + AMP + diphosphate + H(+). It functions in the pathway amino-acid biosynthesis; L-arginine biosynthesis; L-arginine from L-ornithine and carbamoyl phosphate: step 2/3. The chain is Argininosuccinate synthase from Corynebacterium diphtheriae (strain ATCC 700971 / NCTC 13129 / Biotype gravis).